Consider the following 353-residue polypeptide: Chorismate synthase (353 aa).

NADP(+) contacts are provided by Arg48 and Arg54. Residues 125-127 (RSS), 238-239 (NA), Gly278, 293-297 (KPTSS), and Arg319 contribute to the FMN site.

This sequence belongs to the chorismate synthase family. In terms of assembly, homotetramer. The cofactor is FMNH2.

The enzyme catalyses 5-O-(1-carboxyvinyl)-3-phosphoshikimate = chorismate + phosphate. It participates in metabolic intermediate biosynthesis; chorismate biosynthesis; chorismate from D-erythrose 4-phosphate and phosphoenolpyruvate: step 7/7. In terms of biological role, catalyzes the anti-1,4-elimination of the C-3 phosphate and the C-6 proR hydrogen from 5-enolpyruvylshikimate-3-phosphate (EPSP) to yield chorismate, which is the branch point compound that serves as the starting substrate for the three terminal pathways of aromatic amino acid biosynthesis. This reaction introduces a second double bond into the aromatic ring system. This Buchnera aphidicola subsp. Schizaphis graminum (strain Sg) protein is Chorismate synthase.